The sequence spans 223 residues: Thymidine kinase (223 aa).

ATP contacts are provided by residues glycine 19–threonine 26 and aspartate 96–glutamine 99. The Proton acceptor role is filled by glutamate 97. Cysteine 153, cysteine 156, cysteine 191, and histidine 194 together coordinate Zn(2+).

It belongs to the thymidine kinase family. Homotetramer.

It is found in the cytoplasm. The enzyme catalyses thymidine + ATP = dTMP + ADP + H(+). The chain is Thymidine kinase from Ureaplasma parvum serovar 3 (strain ATCC 27815 / 27 / NCTC 11736).